The following is a 355-amino-acid chain: 3-dehydroquinate synthase (355 aa).

Residues 71–76, 105–109, 129–130, Lys142, and Lys151 each bind NAD(+); these read EGEERK, GVVGD, and TS. Residues Glu184, His246, and His263 each contribute to the Zn(2+) site.

It belongs to the sugar phosphate cyclases superfamily. Dehydroquinate synthase family. Requires Co(2+) as cofactor. The cofactor is Zn(2+). NAD(+) is required as a cofactor.

It is found in the cytoplasm. The catalysed reaction is 7-phospho-2-dehydro-3-deoxy-D-arabino-heptonate = 3-dehydroquinate + phosphate. It functions in the pathway metabolic intermediate biosynthesis; chorismate biosynthesis; chorismate from D-erythrose 4-phosphate and phosphoenolpyruvate: step 2/7. Its function is as follows. Catalyzes the conversion of 3-deoxy-D-arabino-heptulosonate 7-phosphate (DAHP) to dehydroquinate (DHQ). In Streptococcus pneumoniae (strain ATCC 700669 / Spain 23F-1), this protein is 3-dehydroquinate synthase.